Reading from the N-terminus, the 95-residue chain is Co-chaperonin GroES (95 aa).

Belongs to the GroES chaperonin family. Heptamer of 7 subunits arranged in a ring. Interacts with the chaperonin GroEL.

The protein resides in the cytoplasm. Functionally, together with the chaperonin GroEL, plays an essential role in assisting protein folding. The GroEL-GroES system forms a nano-cage that allows encapsulation of the non-native substrate proteins and provides a physical environment optimized to promote and accelerate protein folding. GroES binds to the apical surface of the GroEL ring, thereby capping the opening of the GroEL channel. This chain is Co-chaperonin GroES, found in Rickettsia canadensis (strain McKiel).